Here is a 427-residue protein sequence, read N- to C-terminus: Peptidase B (427 aa).

2 residues coordinate Mn(2+): Lys195 and Asp200. The active site involves Lys207. Mn(2+) contacts are provided by Asp218, Asp277, and Glu279. Arg281 is an active-site residue.

Belongs to the peptidase M17 family. As to quaternary structure, homohexamer. Mn(2+) is required as a cofactor.

The protein localises to the cytoplasm. The enzyme catalyses Release of an N-terminal amino acid, Xaa, from a peptide or arylamide. Xaa is preferably Glu or Asp but may be other amino acids, including Leu, Met, His, Cys and Gln.. Functionally, probably plays an important role in intracellular peptide degradation. The polypeptide is Peptidase B (Salmonella choleraesuis (strain SC-B67)).